The following is a 129-amino-acid chain: Lysozyme C (129 aa).

The region spanning 1–129 (KVFSKCELAH…LSEYLASCNL (129 aa)) is the C-type lysozyme domain. Intrachain disulfides connect C6-C127, C30-C115, C65-C80, and C76-C94. Active-site residues include E35 and D53. The Ca(2+) site is built by K82, D85, N87, D90, and D91.

Belongs to the glycosyl hydrolase 22 family. In terms of assembly, monomer. Ca(2+) is required as a cofactor.

The enzyme catalyses Hydrolysis of (1-&gt;4)-beta-linkages between N-acetylmuramic acid and N-acetyl-D-glucosamine residues in a peptidoglycan and between N-acetyl-D-glucosamine residues in chitodextrins.. In terms of biological role, lysozymes have primarily a bacteriolytic function; those in tissues and body fluids are associated with the monocyte-macrophage system and enhance the activity of immunoagents. The chain is Lysozyme C (LYZ) from Equus asinus (Donkey).